The primary structure comprises 641 residues: Protein zwilch (641 aa).

At Ser-312 the chain carries Phosphoserine.

The protein belongs to the ZWILCH family. As to quaternary structure, component of the RZZ complex composed of rod, Zw10 and Zwilch.

It localises to the cytoplasm. The protein resides in the chromosome. Its subcellular location is the centromere. It is found in the kinetochore. The protein localises to the cytoskeleton. It localises to the spindle. Functionally, essential component of the mitotic checkpoint, which prevents cells from prematurely exiting mitosis. Required for the assembly of the dynein-dynactin, Mad2 complexes and spindly/CG15415 onto kinetochores. Its function related to the spindle assembly machinery is proposed to depend on its association in the RZZ complex. Failure to assemble the complex due to the absence of any one of its components, results in the incorrect redistribution of the remaining components to diverse membrane compartments. The polypeptide is Protein zwilch (Drosophila melanogaster (Fruit fly)).